Here is a 358-residue protein sequence, read N- to C-terminus: Ganglioside-induced differentiation-associated protein 1 (358 aa).

In terms of domain architecture, GST N-terminal spans 24-105; it reads VHLILYHWTH…YLEQTFLDER (82 aa). Residues Lys50, Lys172, Lys173, Lys188, and Lys190 each participate in a glycyl lysine isopeptide (Lys-Gly) (interchain with G-Cter in ubiquitin) cross-link. The GST C-terminal domain maps to 153 to 309; it reads PAYATTRIRS…LISAVLPTAF (157 aa). The residue at position 203 (Lys203) is an N6-acetyllysine; alternate. Lys203 participates in a covalent cross-link: Glycyl lysine isopeptide (Lys-Gly) (interchain with G-Cter in ubiquitin); alternate. Glycyl lysine isopeptide (Lys-Gly) (interchain with G-Cter in ubiquitin) cross-links involve residues Lys206, Lys207, and Lys214. The next 2 membrane-spanning stretches (helical) occupy residues 292-312 and 320-340; these read VLGH…FRVA and LGST…FMLF. The required for mitochondrial localization stretch occupies residues 320-358; that stretch reads LGSTLVVGLLVGMGYFAFMLFRRRLGSMILALRPRPNYF.

This sequence belongs to the GST superfamily. In terms of assembly, homodimer. In terms of processing, ubiquitinated by PRKN during mitophagy, leading to its degradation and enhancement of mitophagy. Deubiquitinated by USP30. In terms of tissue distribution, expressed in brain, spinal cord, muscles and intestinal villi. In the central nervous system expressed most prominently in the cortex, cerebellum, thalamus, olfactory bulb, and spinal cord. Expressed also in sciatic nerves and in dorsal root ganglia.

It is found in the mitochondrion outer membrane. It localises to the cytoplasm. Regulates the mitochondrial network by promoting mitochondrial fission. This is Ganglioside-induced differentiation-associated protein 1 (Gdap1) from Mus musculus (Mouse).